The sequence spans 299 residues: UDP-N-acetylenolpyruvoylglucosamine reductase (299 aa).

The 166-residue stretch at 28-193 (IGGPVDLMVL…VSALMQLHKE (166 aa)) folds into the FAD-binding PCMH-type domain. Residue Arg-172 is part of the active site. Residue Ser-222 is the Proton donor of the active site. Glu-292 is an active-site residue.

This sequence belongs to the MurB family. FAD is required as a cofactor.

It is found in the cytoplasm. It catalyses the reaction UDP-N-acetyl-alpha-D-muramate + NADP(+) = UDP-N-acetyl-3-O-(1-carboxyvinyl)-alpha-D-glucosamine + NADPH + H(+). The protein operates within cell wall biogenesis; peptidoglycan biosynthesis. Cell wall formation. In Syntrophomonas wolfei subsp. wolfei (strain DSM 2245B / Goettingen), this protein is UDP-N-acetylenolpyruvoylglucosamine reductase.